Here is a 442-residue protein sequence, read N- to C-terminus: tRNA-2-methylthio-N(6)-dimethylallyladenosine synthase (442 aa).

An MTTase N-terminal domain is found at 3-120 (NKLYIRTFGC…LPNMLNDALN (118 aa)). [4Fe-4S] cluster is bound by residues cysteine 12, cysteine 49, cysteine 83, cysteine 157, cysteine 161, and cysteine 164. The Radical SAM core domain maps to 143–375 (RTNSVTAFVS…QKTINNNTEH (233 aa)). The region spanning 378–440 (QLMIGSIQKV…GNSLMGDLLT (63 aa)) is the TRAM domain.

This sequence belongs to the methylthiotransferase family. MiaB subfamily. Monomer. [4Fe-4S] cluster is required as a cofactor.

The protein resides in the cytoplasm. The catalysed reaction is N(6)-dimethylallyladenosine(37) in tRNA + (sulfur carrier)-SH + AH2 + 2 S-adenosyl-L-methionine = 2-methylsulfanyl-N(6)-dimethylallyladenosine(37) in tRNA + (sulfur carrier)-H + 5'-deoxyadenosine + L-methionine + A + S-adenosyl-L-homocysteine + 2 H(+). In terms of biological role, catalyzes the methylthiolation of N6-(dimethylallyl)adenosine (i(6)A), leading to the formation of 2-methylthio-N6-(dimethylallyl)adenosine (ms(2)i(6)A) at position 37 in tRNAs that read codons beginning with uridine. This Vesicomyosocius okutanii subsp. Calyptogena okutanii (strain HA) protein is tRNA-2-methylthio-N(6)-dimethylallyladenosine synthase.